Here is an 87-residue protein sequence, read N- to C-terminus: MASLSHILVLWVGILTVVNAEAPQEHDPFTYDYQSLRIGGLIIAGILFILGILIVLSRRCRCKFNQQQSLGKMRSPHLAAQFSSESC.

A signal peptide spans 1–20 (MASLSHILVLWVGILTVVNA). At 21–35 (EAPQEHDPFTYDYQS) the chain is on the extracellular side. Residues 36-56 (LRIGGLIIAGILFILGILIVL) traverse the membrane as a helical segment. At 57-87 (SRRCRCKFNQQQSLGKMRSPHLAAQFSSESC) the chain is on the cytoplasmic side. A lipid anchor (S-palmitoyl cysteine) is attached at cysteine 60. Residue cysteine 62 is modified to S-glutathionyl cysteine; alternate. Cysteine 62 carries the S-palmitoyl cysteine; alternate lipid modification. Serine 75 carries the post-translational modification Phosphoserine; by PKA and PKC. Serine 83 carries the phosphoserine; by PKA modification.

It belongs to the FXYD family. As to quaternary structure, homotetramer. Monomer. Regulatory subunit of the sodium/potassium-transporting ATPase (NKA) which is composed of a catalytic alpha subunit, a non-catalytic beta subunit and an additional regulatory subunit. The monomeric form associates with NKA while the oligomeric form does not. Interacts with the catalytic alpha-1 subunit ATP1A1. Also interacts with the catalytic alpha-2 and alpha-3 subunits ATP1A2 and ATP1A3. Very little interaction with ATP1A1, ATP1A2 or ATP1A3 when phosphorylated at Ser-83. Interacts with the non-catalytic beta-1 subunit ATP1B1. Oxidative stress decreases interaction with ATP1A1 but increases interaction with ATP1B1. Post-translationally, major plasma membrane substrate for cAMP-dependent protein kinase (PKA) and protein kinase C (PKC) in several different tissues. Phosphorylated in response to insulin and adrenergic stimulation. Phosphorylation at Ser-83 stimulates sodium/potassium-transporting ATPase activity while the unphosphorylated form inhibits sodium/potassium-transporting ATPase activity. Phosphorylation increases tetramerization, decreases binding to ATP1A1 and reduces inhibition of ATP1A1 activity. Phosphorylation at Ser-75 leads to greatly reduced interaction with ATP1A1, ATP1A2 and ATP1A3. May be phosphorylated by DMPK. In terms of processing, palmitoylation increases half-life and stability and is enhanced upon phosphorylation at Ser-83 by PKA.

The protein resides in the cell membrane. Its subcellular location is the sarcolemma. The protein localises to the apical cell membrane. It localises to the membrane. It is found in the caveola. The protein resides in the T-tubule. Its function is as follows. Associates with and regulates the activity of the sodium/potassium-transporting ATPase (NKA) which transports Na(+) out of the cell and K(+) into the cell. Inhibits NKA activity in its unphosphorylated state and stimulates activity when phosphorylated. Reduces glutathionylation of the NKA beta-1 subunit ATP1B1, thus reversing glutathionylation-mediated inhibition of ATP1B1. Contributes to female sexual development by maintaining the excitability of neurons which secrete gonadotropin-releasing hormone. In Sus scrofa (Pig), this protein is Phospholemman.